The primary structure comprises 391 residues: Casein kinase II subunit alpha (391 aa).

The interval 36–41 is interaction with beta subunit; sequence QDDYQL. Residues 39–324 enclose the Protein kinase domain; the sequence is YQLVRKLGRG…AREAMEHPYF (286 aa). ATP-binding positions include 45–53 and Lys-68; that span reads LGRGKYSEV. Asp-156 functions as the Proton acceptor in the catalytic mechanism. Residues 335–346 show a composition bias toward polar residues; that stretch reads GSSNMPGGSTPV. Residues 335-363 form a disordered region; it reads GSSNMPGGSTPVSSASMMSGISSVPTPSP. Residues 347-357 are compositionally biased toward low complexity; the sequence is SSASMMSGISS.

Belongs to the protein kinase superfamily. Ser/Thr protein kinase family. CK2 subfamily. Tetramer composed of an alpha chain, an alpha' and two beta chains. Interacts with RNPS1.

The protein resides in the nucleus. The catalysed reaction is L-seryl-[protein] + ATP = O-phospho-L-seryl-[protein] + ADP + H(+). The enzyme catalyses L-threonyl-[protein] + ATP = O-phospho-L-threonyl-[protein] + ADP + H(+). In terms of biological role, catalytic subunit of a constitutively active serine/threonine-protein kinase complex that phosphorylates a large number of substrates containing acidic residues C-terminal to the phosphorylated serine or threonine. Regulates numerous cellular processes, such as cell cycle progression, apoptosis and transcription, as well as viral infection. May act as a regulatory node which integrates and coordinates numerous signals leading to an appropriate cellular response. During mitosis, functions as a component of the p53/TP53-dependent spindle assembly checkpoint (SAC) that maintains cyclin-B-CDK1 activity and G2 arrest in response to spindle damage. Can also negatively regulate apoptosis. Phosphorylates the caspases CASP9 and CASP2 and the apoptotic regulator NOL3. Phosphorylation protects CASP9 from cleavage and activation by CASP8, and inhibits the dimerization of CASP2 and activation of CASP8. Plays an important role in the circadian clock function by phosphorylating BMAL1. This is Casein kinase II subunit alpha (CSNK2A1) from Gallus gallus (Chicken).